We begin with the raw amino-acid sequence, 82 residues long: Small ribosomal subunit protein bS16c (82 aa).

It belongs to the bacterial ribosomal protein bS16 family.

It is found in the plastid. Its subcellular location is the chloroplast. This is Small ribosomal subunit protein bS16c from Pyropia yezoensis (Susabi-nori).